Reading from the N-terminus, the 159-residue chain is Phosphopantetheine adenylyltransferase (159 aa).

Position 9 (serine 9) interacts with substrate. Residues 9 to 10 (SF) and histidine 17 contribute to the ATP site. Lysine 41, leucine 73, and arginine 87 together coordinate substrate. Residues 88–90 (GLR), glutamate 98, and 123–129 (YSYVSSS) contribute to the ATP site.

It belongs to the bacterial CoaD family. In terms of assembly, homohexamer. Requires Mg(2+) as cofactor.

Its subcellular location is the cytoplasm. The catalysed reaction is (R)-4'-phosphopantetheine + ATP + H(+) = 3'-dephospho-CoA + diphosphate. Its pathway is cofactor biosynthesis; coenzyme A biosynthesis; CoA from (R)-pantothenate: step 4/5. In terms of biological role, reversibly transfers an adenylyl group from ATP to 4'-phosphopantetheine, yielding dephospho-CoA (dPCoA) and pyrophosphate. This Shouchella clausii (strain KSM-K16) (Alkalihalobacillus clausii) protein is Phosphopantetheine adenylyltransferase.